Here is a 74-residue protein sequence, read N- to C-terminus: U3-agatoxin-Ao1f (74 aa).

Positions 1 to 20 (MRAIISLLLISTMVFGVIEA) are cleaved as a signal peptide. Residues 21 to 34 (VSLEEGLKIFEGER) constitute a propeptide that is removed on maturation. Cystine bridges form between Cys-37-Cys-53, Cys-44-Cys-58, Cys-52-Cys-68, and Cys-60-Cys-66. Asn-72 is modified (asparagine amide).

This sequence belongs to the neurotoxin 07 (Beta/delta-agtx) family. 03 (aga-4) subfamily. Aga sub-subfamily. Expressed by the venom gland.

The protein localises to the secreted. Functionally, insecticidal neurotoxin that modulates the insect Nav channel (DmNaV1/tipE (para/tipE)) in a unique manner, with both the activation and inactivation processes being affected. The voltage dependence of activation is shifted toward more hyperpolarized potentials (analogous to site 4 toxins) and a non-inactivating persistent sodium current is induced (site 3-like action). Interestingly, both effects take place in a voltage-dependent manner, producing a bell-shaped curve between -80 and 0 mV. In vivo, induces an irreversible spastic paralysis when injected into insects. This is U3-agatoxin-Ao1f from Agelena orientalis (Funnel-web spider).